The primary structure comprises 282 residues: ATP synthase gamma chain (282 aa).

It belongs to the ATPase gamma chain family. In terms of assembly, F-type ATPases have 2 components, CF(1) - the catalytic core - and CF(0) - the membrane proton channel. CF(1) has five subunits: alpha(3), beta(3), gamma(1), delta(1), epsilon(1). CF(0) has three main subunits: a, b and c.

It is found in the cell inner membrane. Produces ATP from ADP in the presence of a proton gradient across the membrane. The gamma chain is believed to be important in regulating ATPase activity and the flow of protons through the CF(0) complex. In Fusobacterium nucleatum subsp. nucleatum (strain ATCC 25586 / DSM 15643 / BCRC 10681 / CIP 101130 / JCM 8532 / KCTC 2640 / LMG 13131 / VPI 4355), this protein is ATP synthase gamma chain.